The primary structure comprises 690 residues: MNQNFYSMIDRYKHQQLRIGPVSPQQISAWANKILPNGEVVGEVTKPYTFHYKTNKPEKDGLFCERIFGPIKSGICACGNYRVIGAEKEDPKFCEQCGVEFVDSRVRRYQMGYIKLACPVTHVWYLKRLPSYIANLLDKPLKELEGLVYCDFSFARPIAKKPTFLRLRGSFEYEIQSWKYSIPLFFTTQGFETFRNREISTGAGAIREQLADLDLRIITDNSLIEWKELGDEGSTGNEWEDRKIRRRKDFLVRRMELAKHFIRTNVEPEWMVLCLLPVLPPELRPIIQIDGGKLMSSDINELYRRVIYRNNTLTDLLTTSRSTPGELVMCQEKLVQEAVDTLLDNGIRGQPMRDGHNKVYKSFSDVIEGKEGRFRETLLGKRVDYSGRSVIVVGPSLSLHQCGLPREIAIELFQTFVIRGLIRQHVASNIGIAKSKIREKEPIVWEILQEVMQGHPVLLNRAPTLHRLGIQAFQPILVEGRAICLHPLVCKGFNADFDGDQMAVHVPLSLEAQAEARLLMFSHMNLLSPAIGDPISVPTQDMLIGLYVLTIGNPRGICANRYNFFNCKNDENAPLDNDNYQATKEKEPHFSSSYDALGAYRRKRIRLDSPLWLRWRLDQRVIIGSREVPLEVQYESFGTYHEIYRHYLIVRSVKKEICSIYIRTTVGHISFYREIEEAIQGFYRAYSYAS.

Positions 76, 78, 94, and 97 each coordinate Zn(2+). Residues aspartate 496, aspartate 498, and aspartate 500 each contribute to the Mg(2+) site.

The protein belongs to the RNA polymerase beta' chain family. RpoC1 subfamily. In plastids the minimal PEP RNA polymerase catalytic core is composed of four subunits: alpha, beta, beta', and beta''. When a (nuclear-encoded) sigma factor is associated with the core the holoenzyme is formed, which can initiate transcription. Requires Mg(2+) as cofactor. Zn(2+) is required as a cofactor.

It is found in the plastid. Its subcellular location is the chloroplast. The enzyme catalyses RNA(n) + a ribonucleoside 5'-triphosphate = RNA(n+1) + diphosphate. In terms of biological role, DNA-dependent RNA polymerase catalyzes the transcription of DNA into RNA using the four ribonucleoside triphosphates as substrates. This is DNA-directed RNA polymerase subunit beta' from Lemna minor (Common duckweed).